The sequence spans 1289 residues: DNA-directed RNA polymerase subunit beta (1289 aa).

This sequence belongs to the RNA polymerase beta chain family. As to quaternary structure, the RNAP catalytic core consists of 2 alpha, 1 beta, 1 beta' and 1 omega subunit. When a sigma factor is associated with the core the holoenzyme is formed, which can initiate transcription.

It carries out the reaction RNA(n) + a ribonucleoside 5'-triphosphate = RNA(n+1) + diphosphate. Its function is as follows. DNA-dependent RNA polymerase catalyzes the transcription of DNA into RNA using the four ribonucleoside triphosphates as substrates. This chain is DNA-directed RNA polymerase subunit beta, found in Methylacidiphilum infernorum (isolate V4) (Methylokorus infernorum (strain V4)).